Here is a 146-residue protein sequence, read N- to C-terminus: MGRFIFGSFGLLVLFLSLSGTGADCPSDWSSYDLYCYKVFQQRMNWEDAEQFCRQQHTGSHLLSFHSSEEVDFVVSKTLPILKADFVWIGLTDVWSACRLQWSDGTELKYNAWTAESECIASKTTDNQWWTRSCSRTYPFVCKLEV.

An N-terminal signal peptide occupies residues 1 to 23 (MGRFIFGSFGLLVLFLSLSGTGA). One can recognise a C-type lectin domain in the interval 24 to 143 (DCPSDWSSYD…CSRTYPFVCK (120 aa)). 3 cysteine pairs are disulfide-bonded: C25–C36, C53–C142, and C119–C134.

The protein belongs to the snaclec family. In terms of assembly, heterodimer of subunits alpha and beta; disulfide-linked. As to expression, expressed by the venom gland.

The protein resides in the secreted. Weakly agglutinates platelets at high doses by binding to GPIbalpha (GP1BA). The sequence is that of Snaclec alboaggregin-B subunit beta from Trimeresurus albolabris (White-lipped pit viper).